The following is a 228-amino-acid chain: Thermonuclease (228 aa).

The first 23 residues, Met1 to Ala23, serve as a signal peptide directing secretion. Positions Ile24–Ala60 are excised as a propeptide. Asp100 lines the Ca(2+) pocket. Arg114 is an active-site residue. Residues Asp119 and Thr120 each contribute to the Ca(2+) site. Residues Glu122 and Arg166 contribute to the active site.

It belongs to the thermonuclease family. The cofactor is Ca(2+).

It is found in the secreted. It catalyses the reaction Endonucleolytic cleavage to nucleoside 3'-phosphates and 3'-phosphooligonucleotide end-products.. Enzyme that catalyzes the hydrolysis of both DNA and RNA at the 5' position of the phosphodiester bond. The protein is Thermonuclease (nuc) of Staphylococcus aureus (strain MSSA476).